Reading from the N-terminus, the 135-residue chain is Transcriptional activator protein (135 aa).

The Nuclear localization signal signature appears at K17–R32. A zinc finger spans residues C37–H54. A transactivation region spans residues H120–L135.

Belongs to the geminiviridae transcriptional activator protein family. Monomer. Homodimer. Homooligomer. Self-interaction correlates with nuclear localization and efficient activation of transcription. Monomers suppress local silencing by interacting with and inactivating host adenosine kinase 2 (ADK2) in the cytoplasm. Interacts with and inhibits host SNF1 kinase. Binds to ssDNA. In terms of processing, phosphorylated.

The protein localises to the host nucleus. The protein resides in the host cytoplasm. Its function is as follows. Strong activator of the late viral genes promoters. Acts as a suppressor of RNA-mediated gene silencing, also known as post-transcriptional gene silencing (PTGS), a mechanism of plant viral defense that limits the accumulation of viral RNAs. TrAP suppresses the host RNA silencing by inhibiting adenosine kinase 2 (ADK2), a kinase involved in a general methylation pathway. Also suppresses the host basal defense by interacting with and inhibiting SNF1 kinase, a key regulator of cell metabolism implicated in innate antiviral defense. Determines pathogenicity. The polypeptide is Transcriptional activator protein (Tomato yellow leaf curl Sardinia virus (isolate Spain-2) (TYLCSV)).